The sequence spans 421 residues: Autophagy-related protein 17 (421 aa).

Belongs to the ATG17 family. In terms of assembly, forms a complex with ATG13, ATG29 and CIS1/ATG31. The ATG17-ATG29-ATG31 complex interacts with the ATG1-ATG13 complex. Forms a complex with SNX4 and ATG20. Interacts with ATG11.

Its subcellular location is the cytoplasm. It is found in the preautophagosomal structure membrane. Functionally, autophagy-specific protein that functions with ATG13, ATG29, and CIS1/ATG31 in response to autophagy-inducing signals as a scaffold to recruit other ATG proteins to organize pre-autophagosomal structure (PAS) formation. Modulates the timing and magnitude of the autophagy response, such as the size of the sequestering vesicles, through interacting with and regulating ATG1 kinase activity. Plays particularly a role in pexophagy and nucleophagy. With ATG13, is required for ATG1 activation by autophosphorylation. Recruits ATG9 to the pre-autophagosomal structure. The polypeptide is Autophagy-related protein 17 (Kluyveromyces marxianus (strain DMKU3-1042 / BCC 29191 / NBRC 104275) (Yeast)).